A 289-amino-acid chain; its full sequence is MAEITAAMVKELRERTGLGMMECKKALTAAGGDIEKAIDDMRAAGAIKAAKKAGNIAAEGSIAVKIAADNKAAVIIEVNSQTDFLALQDDFKGFVAESLEKAFNEKLTDAAPLVEAREEARLALVAKTGENVNIRRLTRVEGDVVGAYLHGHRIGVVVNLKGGNPELAKDIAMHVAASNPQFLNASEVSEEAIAKEKEIFLALNADKIAGKPENIVENMVKGRISKFLAEASLVEQPFVKNPEVKVGDLAKQAGAEIVSFVRYEVGEGIEKAEVDFAAEVAAQVAATKQ.

An involved in Mg(2+) ion dislocation from EF-Tu region spans residues 82 to 85; sequence TDFL.

The protein belongs to the EF-Ts family.

The protein localises to the cytoplasm. Associates with the EF-Tu.GDP complex and induces the exchange of GDP to GTP. It remains bound to the aminoacyl-tRNA.EF-Tu.GTP complex up to the GTP hydrolysis stage on the ribosome. This Pseudomonas aeruginosa (strain LESB58) protein is Elongation factor Ts.